The primary structure comprises 664 residues: ATP-dependent RNA helicase MSS116, mitochondrial (664 aa).

The transit peptide at 1-26 (MLTSILIKGRTPVLASRNLLAALSNC) directs the protein to the mitochondrion. Residues 42–79 (NRDQRNFGRNQRNNNSNRYRNSRFNSRPRTRSREDDDE) form a disordered region. The span at 48–68 (FGRNQRNNNSNRYRNSRFNSR) shows a compositional bias: low complexity. The Q motif motif lies at 106 to 134 (SLLEEGVLDKEIHKAITRMEFPGLTPVQQ). One can recognise a Helicase ATP-binding domain in the interval 139–326 (PILSSEDHDV…NNIMNKKECL (188 aa)). 152–159 (AKTGTGKT) is a binding site for ATP. Positions 267–270 (DEAD) match the DEAD box motif. In terms of domain architecture, Helicase C-terminal spans 355 to 512 (SIFAAVEHIK…EKYEPSEEIK (158 aa)). The tract at residues 602–664 (GNNKSYDYDD…NYSSRNSNIY (63 aa)) is disordered. Residues 628 to 638 (QNRDYDDEPFR) show a composition bias toward basic and acidic residues. The span at 639-649 (RSNNNRRSFSR) shows a compositional bias: low complexity. A compositionally biased stretch (polar residues) spans 653 to 664 (KNNYSSRNSNIY).

This sequence belongs to the DEAD box helicase family. DDX18/HAS1 subfamily.

It is found in the mitochondrion matrix. It catalyses the reaction ATP + H2O = ADP + phosphate + H(+). In terms of biological role, ATP-dependent RNA helicase required for mitochondrial splicing of group I and II introns. Specifically involved in the ATP-dependent splicing of the bl1 intron of COB. Also required for efficient mitochondrial translation. This chain is ATP-dependent RNA helicase MSS116, mitochondrial (MSS116), found in Saccharomyces cerevisiae (strain ATCC 204508 / S288c) (Baker's yeast).